Consider the following 448-residue polypeptide: Phosphoglucosamine mutase (448 aa).

Ser101 serves as the catalytic Phosphoserine intermediate. Ser101, Asp242, Asp244, and Asp246 together coordinate Mg(2+). Ser101 carries the phosphoserine modification.

This sequence belongs to the phosphohexose mutase family. It depends on Mg(2+) as a cofactor. Post-translationally, activated by phosphorylation.

It carries out the reaction alpha-D-glucosamine 1-phosphate = D-glucosamine 6-phosphate. Functionally, catalyzes the conversion of glucosamine-6-phosphate to glucosamine-1-phosphate. The chain is Phosphoglucosamine mutase from Afipia carboxidovorans (strain ATCC 49405 / DSM 1227 / KCTC 32145 / OM5) (Oligotropha carboxidovorans).